The chain runs to 688 residues: MARQFSLEKTRNIGIIAHIDAGKTTTTERILFHTGKIHKIGETHDGASQMDWMEQEQERGITITSAATTAFWKDHRINIIDTPGHVDFTVEVSRSLRVLDGAVTVIDAQAGVEPQTETVWRQASEYKVPRVIFVNKMDKVGADFAYAIETLKQRLGVHASAIQWPIGSENDFNGIIDLVEMNAFEYDNTSPETGKVVPIPSDLESITQTKRNELIETLSTLDEELMMYYLEEKPISSEMLKNSIRKATLQASFFPVLCGSSFKNKGVVKMLDAIVDYLPAPCDVAAIVGFDSDNQEIVRTGLDEEPFIALAFKVMTDPYVGKLTFFRIYSGSVKAGSYVTNTTKGTKERFGRLLQMHANSREEVKEAYTGDILAVVGLKATTTGDTLASEGQTIVLESMNFPEPVIEIAVEPKTKADQDKMGIALAKLAEEDPTFKVFSNHETGQTIIAGMGELHLDIIIERLKREFKVQANVTEPQVAYRETITQETETEGKFIRQSGGRGQYGHVWMRFEPNPGKGFEFVNKIVGGVVPREYVPAVQKGIQEALAGGILAGYQIIDVKATLFDGSYHDVDSSEMAFKIAASMALKETKTKGNPVILEPIMDVEVVTPNDYVGNVIGDLTSRRGRLENQESRANAVAIRAFVPLSEMFGYATVLRSNTQGRATFIMQFAKYEKAPKSITEEIIKKRA.

Residues 8–282 (EKTRNIGIIA…AIVDYLPAPC (275 aa)) enclose the tr-type G domain. Residues 17 to 24 (AHIDAGKT), 81 to 85 (DTPGH), and 135 to 138 (NKMD) each bind GTP.

Belongs to the TRAFAC class translation factor GTPase superfamily. Classic translation factor GTPase family. EF-G/EF-2 subfamily.

It localises to the cytoplasm. In terms of biological role, catalyzes the GTP-dependent ribosomal translocation step during translation elongation. During this step, the ribosome changes from the pre-translocational (PRE) to the post-translocational (POST) state as the newly formed A-site-bound peptidyl-tRNA and P-site-bound deacylated tRNA move to the P and E sites, respectively. Catalyzes the coordinated movement of the two tRNA molecules, the mRNA and conformational changes in the ribosome. The chain is Elongation factor G from Onion yellows phytoplasma (strain OY-M).